The sequence spans 39 residues: Contryphan-Cal3 (39 aa).

Residues 1–20 form the signal peptide; that stretch reads MTRTAVLLLTLLFLVAMAAS. A disulfide bridge connects residues C29 and C35.

As to expression, expressed by the venom duct.

The protein localises to the secreted. Its function is as follows. Probable neurotoxin. The polypeptide is Contryphan-Cal3 (Californiconus californicus (California cone)).